A 614-amino-acid chain; its full sequence is Pyruvate decarboxylase 2 (614 aa).

Substrate is bound by residues Asp50 and His137. Positions 415 to 523 (DSWFNCQKLK…FLINNGGYTI (109 aa)) are thiamine pyrophosphate binding. Asp491, Asn518, and Gly520 together coordinate Mg(2+). Glu524 is a substrate binding site.

Belongs to the TPP enzyme family. In terms of assembly, homotetramer. Requires a metal cation as cofactor. The cofactor is thiamine diphosphate. In terms of tissue distribution, pollen.

It catalyses the reaction a 2-oxocarboxylate + H(+) = an aldehyde + CO2. The polypeptide is Pyruvate decarboxylase 2 (PDC2) (Nicotiana tabacum (Common tobacco)).